The chain runs to 344 residues: L-rhamnose-proton symporter (344 aa).

10 helical membrane-spanning segments follow: residues 4 to 24 (AITM…CFYA), 38 to 58 (WSVG…ALLL), 68 to 88 (FSLS…IGNI), 101 to 121 (MGIG…TPII), 137 to 157 (TLLG…AGQL), 175 to 195 (LVLA…MNAA), 214 to 234 (LPSY…FCFI), 259 to 279 (VLLS…YAWG), 290 to 310 (ISWM…GLVL), and 323 to 343 (VLSL…MGMA).

Belongs to the L-rhamnose transporter (TC 2.A.7.6) family.

The protein resides in the cell inner membrane. It carries out the reaction L-rhamnopyranose(in) + H(+)(in) = L-rhamnopyranose(out) + H(+)(out). Functionally, uptake of L-rhamnose across the cytoplasmic membrane with the concomitant transport of protons into the cell (symport system). This Escherichia coli O157:H7 protein is L-rhamnose-proton symporter.